The primary structure comprises 434 residues: Polyadenylate-binding protein RBP47C' (434 aa).

Residues 1–50 are disordered; that stretch reads MADVKVQSESESSDSHPLVDYQSLPPYPPPHPPVEVEENQPKTSPTPPPP. 3 RRM domains span residues 103 to 185, 199 to 278, and 306 to 378; these read KTIW…WASF, LSIF…PATP, and TTIF…WGRN.

Belongs to the polyadenylate-binding RBP47 family. Interacts with the poly(A) tail of mRNA in nucleus.

Its subcellular location is the nucleus. It localises to the cytoplasmic granule. Heterogeneous nuclear ribonucleoprotein (hnRNP)-protein binding the poly(A) tail of mRNA and probably involved in some steps of pre-mRNA maturation. This is Polyadenylate-binding protein RBP47C' (RBP47C') from Arabidopsis thaliana (Mouse-ear cress).